A 404-amino-acid chain; its full sequence is Snake venom metalloproteinase H5 (404 aa).

The signal sequence occupies residues 1–6 (FPYQGS). A propeptide spanning residues 7 to 177 (SIMLESGKVN…KPSWVNLTPK (171 aa)) is cleaved from the precursor. The Peptidase M12B domain occupies 184-379 (TSVNLQLVVD…KKPKCIHKKS (196 aa)). 3 disulfide bridges follow: C295–C374, C336–C358, and C338–C341. H320 is a Zn(2+) binding site. Residue E321 is part of the active site. 2 residues coordinate Zn(2+): H324 and H330. Positions 379–404 (SLKTDTVSTSVSGNEPLDDNVDGFHA) are excised as a propeptide. The segment at 385 to 404 (VSTSVSGNEPLDDNVDGFHA) is disordered. Acidic residues predominate over residues 394 to 404 (PLDDNVDGFHA).

In terms of assembly, monomer. Requires Zn(2+) as cofactor. In terms of tissue distribution, expressed by the venom gland.

The protein localises to the secreted. Its function is as follows. This probable venom zinc protease is not hemorrhagic when 3 ug are injected onto the back skin of guinea pig. In Deinagkistrodon acutus (Hundred-pace snake), this protein is Snake venom metalloproteinase H5.